The chain runs to 1642 residues: Cobra venom factor (1642 aa).

The signal sequence occupies residues 1-22 (MERMALYLVAALLIGFPGSSHG). 3 N-linked (GlcNAc...) asparagine glycosylation sites follow: asparagine 153, asparagine 158, and asparagine 209. Residues proline 516, aspartate 539, valine 540, and aspartate 542 each contribute to the Mg(2+) site. Intrachain disulfides connect cysteine 544-cysteine 801, cysteine 609-cysteine 644, cysteine 677-cysteine 704, cysteine 678-cysteine 711, cysteine 691-cysteine 712, cysteine 857-cysteine 1492, cysteine 1340-cysteine 1468, cysteine 1368-cysteine 1437, cysteine 1485-cysteine 1490, cysteine 1497-cysteine 1569, cysteine 1516-cysteine 1640, and cysteine 1616-cysteine 1625. A propeptide spanning residues 650-732 (RRRRSSVLLL…QRESELFLAR (83 aa)) is cleaved from the precursor. Positions 654 to 732 (SSVLLLDSNA…QRESELFLAR (79 aa)) are C3a-like domain. One can recognise an Anaphylatoxin-like domain in the interval 677 to 712 (CCEDVMHENPMGYTCEKRAKYIQEGDACKAAFLECC). A factor B binding site region spans residues 736-747 (EDGFIADSDIIS). Positions 985–1263 (HLIITPSGCG…VMAFQALAEY (279 aa)) are excised as a propeptide. Positions 985-1263 (HLIITPSGCG…VMAFQALAEY (279 aa)) are C3d-like domain. A cross-link (isoglutamyl cysteine thioester (Cys-Gln)) is located at residues 993–996 (CGEQ). The tract at residues 1190–1253 (VLMAASTGRD…GETYGQTQAT (64 aa)) is factor H binding site. A glycan (N-linked (GlcNAc...) asparagine) is linked at asparagine 1346. The NTR domain occupies 1497 to 1640 (CSSLNHQERI…FSYTLTEFGC (144 aa)).

This sequence belongs to the venom complement C3 homolog family. As to quaternary structure, heterotrimer of alpha, beta and gamma chains; disulfide-linked. Is active with factor B in the presence of factor D. First processed by the removal of 4 Arg residues by furin-type protease, forming two chains, alpha and gamma/beta precursor, linked by a disulfide bond. Probably, the cobrin cleaves the C3a-like domain and then the C3d-like domain, generating the mature cobra venom factor (CVF). This mature CVF is composed of three chains: alpha, gamma and beta. Post-translationally, contains 3 N-linked oligosaccharide chains, two in the alpha-chain and one in the beta-chain. Glycosylation is not required for the biological activity. However, it contributes to the immunogenicity of CVF. The carbohydrate content is 7.4. The major oligosaccharide is a symmetric fucosylated biantennary complex-type chain with an unusual alpha-galactosylated Le(x) structure at its non-reducing end. In terms of tissue distribution, expressed by the venom gland.

Its subcellular location is the secreted. Complement-activating protein in cobra venom. It is a structural and functional analog of complement component C3b, the activated form of C3. It binds factor B (CFB), which is subsequently cleaved by factor D (CFD) to form the bimolecular complex CVF/Bb. CVF/Bb is a C3/C5 convertase that cleaves both complement components C3 and C5. Structurally, it resembles the C3b degradation product C3c, which is not able to form a C3/C5 convertase. Unlike C3b/Bb, CVF/Bb is a stable complex and completely resistant to the actions of complement regulatory factors H (CFH) and I (CFI). Therefore, CVF continuously activates complement resulting in the depletion of complement activity. This is Cobra venom factor from Naja kaouthia (Monocled cobra).